An 887-amino-acid polypeptide reads, in one-letter code: ATP-dependent DNA helicase srs2 (887 aa).

Positions 9 to 304 constitute a UvrD-like helicase ATP-binding domain; that stretch reads KFLNEEQRIS…LHLERNYRSA (296 aa). ATP is bound by residues 33–38 and R302; that span reads GSGKTR. Residues 305 to 597 form the UvrD-like helicase C-terminal domain; the sequence is KPILELALSI…TISTLHAAKG (293 aa).

This sequence belongs to the helicase family. UvrD subfamily.

It localises to the nucleus. It catalyses the reaction Couples ATP hydrolysis with the unwinding of duplex DNA by translocating in the 3'-5' direction.. The catalysed reaction is ATP + H2O = ADP + phosphate + H(+). Functionally, ATP-dependent DNA helicase involved in DNA repair at least for UV-induced lesions. Also aids the recombinational repair of camptothecin-induced collapsed replication forks. In Schizosaccharomyces pombe (strain 972 / ATCC 24843) (Fission yeast), this protein is ATP-dependent DNA helicase srs2 (srs2).